The following is a 160-amino-acid chain: Calcium-binding protein CP1 (160 aa).

3 consecutive EF-hand domains span residues 22–49 (AFEI…IPSG), 52–87 (NDET…TPFS), and 93–128 (GDDG…AGLA). Residues Asp27, Asp29, Asp31, Lys33, Asp38, Asp65, Asn67, Asp69, Glu76, Asp106, Asp108, Asp110, Arg112, and Asp117 each coordinate Ca(2+).

In terms of tissue distribution, expressed in roots and flowers.

The protein resides in the cytoplasm. It localises to the cytosol. Its function is as follows. Binds calcium in vitro. The sequence is that of Calcium-binding protein CP1 from Arabidopsis thaliana (Mouse-ear cress).